Consider the following 427-residue polypeptide: Transcobalamin-2 (427 aa).

Residues 1-18 (MRHLGAFLFLLGVLGALT) form the signal peptide. Intrachain disulfides connect Cys21–Cys267, Cys83–Cys96, Cys116–Cys309, and Cys165–Cys205. Residues Gln104, 152-156 (TSYYQ), His190, 190-194 (HHSVD), Asn242, Ser245, Gln291, and 395-397 (WQL) contribute to the cob(II)alamin site.

Belongs to the eukaryotic cobalamin transport proteins family. As to quaternary structure, interacts with CD320 (via LDL-receptor class A domains).

It localises to the secreted. Primary vitamin B12-binding and transport protein. Delivers cobalamin to cells. The polypeptide is Transcobalamin-2 (TCN2) (Homo sapiens (Human)).